Consider the following 346-residue polypeptide: Peroxidase 37 (346 aa).

The first 22 residues, 1-22 (MHSSLIKLGFLLLLIQVSLSHA), serve as a signal peptide directing secretion. At glutamine 23 the chain carries Pyrrolidone carboxylic acid. Disulfide bonds link cysteine 33–cysteine 113, cysteine 66–cysteine 71, cysteine 119–cysteine 323, and cysteine 199–cysteine 231. The active-site Proton acceptor is the histidine 64. 5 residues coordinate Ca(2+): aspartate 65, valine 68, glycine 70, aspartate 72, and serine 74. N-linked (GlcNAc...) asparagine glycosylation occurs at asparagine 79. Position 161 (proline 161) interacts with substrate. Histidine 192 contacts heme b. Threonine 193 contributes to the Ca(2+) binding site. N-linked (GlcNAc...) asparagine glycosylation is found at asparagine 208 and asparagine 236. Residues aspartate 244, threonine 247, and aspartate 252 each coordinate Ca(2+).

This sequence belongs to the peroxidase family. Classical plant (class III) peroxidase subfamily. The cofactor is heme b. It depends on Ca(2+) as a cofactor.

It localises to the secreted. It is found in the vacuole. It catalyses the reaction 2 a phenolic donor + H2O2 = 2 a phenolic radical donor + 2 H2O. Functionally, removal of H(2)O(2), oxidation of toxic reductants, biosynthesis and degradation of lignin, suberization, auxin catabolism, response to environmental stresses such as wounding, pathogen attack and oxidative stress. These functions might be dependent on each isozyme/isoform in each plant tissue. The protein is Peroxidase 37 (PER37) of Arabidopsis thaliana (Mouse-ear cress).